A 345-amino-acid polypeptide reads, in one-letter code: Phosphate acyltransferase (345 aa).

Belongs to the PlsX family. In terms of assembly, homodimer. Probably interacts with PlsY.

It localises to the cytoplasm. It catalyses the reaction a fatty acyl-[ACP] + phosphate = an acyl phosphate + holo-[ACP]. It participates in lipid metabolism; phospholipid metabolism. Catalyzes the reversible formation of acyl-phosphate (acyl-PO(4)) from acyl-[acyl-carrier-protein] (acyl-ACP). This enzyme utilizes acyl-ACP as fatty acyl donor, but not acyl-CoA. This Nitratidesulfovibrio vulgaris (strain ATCC 29579 / DSM 644 / CCUG 34227 / NCIMB 8303 / VKM B-1760 / Hildenborough) (Desulfovibrio vulgaris) protein is Phosphate acyltransferase.